Consider the following 251-residue polypeptide: Probable transcriptional regulatory protein Mflv_3828 (251 aa).

The protein belongs to the TACO1 family.

It is found in the cytoplasm. The chain is Probable transcriptional regulatory protein Mflv_3828 from Mycolicibacterium gilvum (strain PYR-GCK) (Mycobacterium gilvum (strain PYR-GCK)).